A 333-amino-acid polypeptide reads, in one-letter code: Cytosolic Fe-S cluster assembly factor NBP35 (333 aa).

[4Fe-4S] cluster is bound by residues Cys32, Cys46, Cys49, and Cys55. 85-92 provides a ligand contact to ATP; the sequence is GKGGVGKS. Positions 258 and 261 each coordinate [4Fe-4S] cluster.

This sequence belongs to the Mrp/NBP35 ATP-binding proteins family. NUBP1/NBP35 subfamily. In terms of assembly, heterotetramer of 2 NBP35 and 2 CFD1 chains. [4Fe-4S] cluster serves as cofactor.

Its subcellular location is the cytoplasm. It localises to the nucleus. In terms of biological role, component of the cytosolic iron-sulfur (Fe/S) protein assembly (CIA) machinery. Required for maturation of extramitochondrial Fe-S proteins. The NBP35-CFD1 heterotetramer forms a Fe-S scaffold complex, mediating the de novo assembly of an Fe-S cluster and its transfer to target apoproteins. Required for biogenesis and export of both ribosomal subunits, which may reflect a role in assembly of the Fe/S clusters in RLI1, a protein which performs rRNA processing and ribosome export. This chain is Cytosolic Fe-S cluster assembly factor NBP35, found in Eremothecium gossypii (strain ATCC 10895 / CBS 109.51 / FGSC 9923 / NRRL Y-1056) (Yeast).